A 526-amino-acid chain; its full sequence is Tyrosine 2,3-aminomutase (526 aa).

Residue Tyr41 is the Proton donor/acceptor of the active site. His71 provides a ligand contact to substrate. The 5-imidazolinone (Ala-Gly) cross-link spans 130–132 (ASG). Ser131 is modified (2,3-didehydroalanine (Ser)). Substrate contacts are provided by Asn183 and Arg288.

This sequence belongs to the TAL/TAM family. In terms of assembly, homotetramer; dimer of dimers. Post-translationally, contains an active site 4-methylidene-imidazol-5-one (MIO), which is formed autocatalytically by cyclization and dehydration of residues Ala-Ser-Gly.

The catalysed reaction is L-tyrosine = 3-amino-3-(4-hydroxyphenyl)propanoate. It carries out the reaction L-tyrosine = (E)-4-coumarate + NH4(+). In terms of biological role, has aminomutase and, to a much lesser extent, ammonia-lyase activity. Primarily, catalyzes the rearrangement of L-tyrosine to S-beta-tyrosine, which is probably incorporated into secondary metabolite myxovalargin. The aminomutase activity exclusively produces S-beta-tyrosine. The polypeptide is Tyrosine 2,3-aminomutase (Myxococcus sp. (strain Mx-B0)).